The sequence spans 190 residues: Ribosome hibernation promotion factor (190 aa).

The required for ribosome-binding stretch occupies residues 101–190 (RDRGDQEVFV…KYGLIQTSEQ (90 aa)).

It belongs to the HPF/YfiA ribosome-associated protein family. Long HPF subfamily. As to quaternary structure, interacts with 100S ribosomes during exponential growth, as 100S ribosomes decrease (after 28 hours) also found associated with 30s and 50S subunits.

The protein localises to the cytoplasm. Required and sufficient for dimerization of active 70S ribosomes into 100S ribosomes. 110S ribosomes are probably translationally inactive and may serve as a reservoir of easily reactivated ribosomes when necessary in the cell. Also reduces the translation efficiency of a small number of genes. Unlike E.coli, 100S ribosomes are present during exponential growth and decrease during stationary phase. This strain produces 30% fewer 100S ribosomes than strain N315 and RN4200 under the same growth conditions. The chain is Ribosome hibernation promotion factor from Staphylococcus aureus (strain USA300).